The primary structure comprises 78 residues: Acyl carrier protein (78 aa).

In terms of domain architecture, Carrier spans aspartate 2 to glutamine 77. O-(pantetheine 4'-phosphoryl)serine is present on serine 37.

This sequence belongs to the acyl carrier protein (ACP) family. In terms of processing, 4'-phosphopantetheine is transferred from CoA to a specific serine of apo-ACP by AcpS. This modification is essential for activity because fatty acids are bound in thioester linkage to the sulfhydryl of the prosthetic group.

It localises to the cytoplasm. The protein operates within lipid metabolism; fatty acid biosynthesis. Functionally, carrier of the growing fatty acid chain in fatty acid biosynthesis. This is Acyl carrier protein from Treponema denticola (strain ATCC 35405 / DSM 14222 / CIP 103919 / JCM 8153 / KCTC 15104).